A 262-amino-acid chain; its full sequence is Cytochrome c oxidase subunit 3 (262 aa).

6 consecutive transmembrane segments (helical) span residues 39 to 59 (YTMTLFILGNVITILTMYQWW), 83 to 103 (GMILFIVSEVFFFISFFWAFF), 120 to 140 (VGIAAFNPFQIPLLNTAILLA), 163 to 183 (GLFFTIVLGVYFTILQAYEYI), 201 to 221 (ATGFHGLHVLIGTTFLLICFL), and 240 to 260 (AWYWHFVDVVWLFLYITIYWW).

Belongs to the cytochrome c oxidase subunit 3 family. Component of the cytochrome c oxidase (complex IV, CIV), a multisubunit enzyme composed of a catalytic core of 3 subunits and several supernumerary subunits. The complex exists as a monomer or a dimer and forms supercomplexes (SCs) in the inner mitochondrial membrane with ubiquinol-cytochrome c oxidoreductase (cytochrome b-c1 complex, complex III, CIII).

The protein localises to the mitochondrion inner membrane. The catalysed reaction is 4 Fe(II)-[cytochrome c] + O2 + 8 H(+)(in) = 4 Fe(III)-[cytochrome c] + 2 H2O + 4 H(+)(out). In terms of biological role, component of the cytochrome c oxidase, the last enzyme in the mitochondrial electron transport chain which drives oxidative phosphorylation. The respiratory chain contains 3 multisubunit complexes succinate dehydrogenase (complex II, CII), ubiquinol-cytochrome c oxidoreductase (cytochrome b-c1 complex, complex III, CIII) and cytochrome c oxidase (complex IV, CIV), that cooperate to transfer electrons derived from NADH and succinate to molecular oxygen, creating an electrochemical gradient over the inner membrane that drives transmembrane transport and the ATP synthase. Cytochrome c oxidase is the component of the respiratory chain that catalyzes the reduction of oxygen to water. Electrons originating from reduced cytochrome c in the intermembrane space (IMS) are transferred via the dinuclear copper A center (CU(A)) of subunit 2 and heme A of subunit 1 to the active site in subunit 1, a binuclear center (BNC) formed by heme A3 and copper B (CU(B)). The BNC reduces molecular oxygen to 2 water molecules using 4 electrons from cytochrome c in the IMS and 4 protons from the mitochondrial matrix. This chain is Cytochrome c oxidase subunit 3 (COIII), found in Anopheles gambiae (African malaria mosquito).